A 670-amino-acid polypeptide reads, in one-letter code: Protein-glutamine gamma-glutamyltransferase 4 (670 aa).

N-linked (GlcNAc...) asparagine glycans are attached at residues N151 and N219. The active site involves C255. N288 carries N-linked (GlcNAc...) asparagine glycosylation. Active-site residues include H314 and D337. Ca(2+)-binding residues include N377, D379, E429, and E434. 2 N-linked (GlcNAc...) asparagine glycosylation sites follow: N456 and N491.

The protein belongs to the transglutaminase superfamily. Transglutaminase family. As to quaternary structure, homodimer. Ca(2+) is required as a cofactor. In terms of tissue distribution, expressed in the coagulating gland and in the dorsal part of the prostate. Not expressed in the brain, heart, kidney, liver, lung, muscle, pancreas, spleen, stomach, testis and thymus.

It localises to the secreted. It carries out the reaction L-glutaminyl-[protein] + L-lysyl-[protein] = [protein]-L-lysyl-N(6)-5-L-glutamyl-[protein] + NH4(+). Its function is as follows. Associated with the mammalian reproductive process. Plays an important role in the formation of the seminal coagulum through the cross-linking of specific proteins present in the seminal plasma. Transglutaminase is also required to stabilize the copulatory plug. The chain is Protein-glutamine gamma-glutamyltransferase 4 from Mus musculus (Mouse).